The sequence spans 319 residues: Tyrosine phosphatase-like protein N3 (319 aa).

Residues S7–S285 enclose the Tyrosine-protein phosphatase domain.

Belongs to the protein-tyrosine phosphatase family.

The sequence is that of Tyrosine phosphatase-like protein N3 (N7) from Microplitis demolitor bracovirus (isolate Webb) (MdBV).